An 828-amino-acid chain; its full sequence is Glycerol-3-phosphate acyltransferase (828 aa).

The short motif at 309–314 (CHRSHI) is the HXXXXD motif element.

The protein belongs to the GPAT/DAPAT family.

It is found in the cell inner membrane. It carries out the reaction sn-glycerol 3-phosphate + an acyl-CoA = a 1-acyl-sn-glycero-3-phosphate + CoA. The protein operates within phospholipid metabolism; CDP-diacylglycerol biosynthesis; CDP-diacylglycerol from sn-glycerol 3-phosphate: step 1/3. The polypeptide is Glycerol-3-phosphate acyltransferase (Pseudomonas putida (strain GB-1)).